Reading from the N-terminus, the 26-residue chain is Conotoxin Eb6.18 (26 aa).

2 cysteine pairs are disulfide-bonded: Cys7–Cys18 and Cys13–Cys25.

This sequence belongs to the conotoxin O1 superfamily. As to expression, expressed by the venom duct.

Its subcellular location is the secreted. This chain is Conotoxin Eb6.18 (E1), found in Conus ebraeus (Hebrew cone).